The primary structure comprises 473 residues: Lipid A galacturonosyltransferase RgtD (473 aa).

10 helical membrane passes run 6 to 26 (GLLI…FDAT), 68 to 88 (AIYW…LVLM), 94 to 114 (FVGP…PGVA), 118 to 138 (VFFS…LAYF), 160 to 180 (FLTK…LLLI), 190 to 210 (VIIA…WNLQ), 238 to 258 (FFAA…LWAV), 271 to 291 (KMLV…ATVA), 295 to 315 (ANWA…LLYL), and 327 to 347 (INGI…QLLL).

It localises to the cell membrane. It functions in the pathway bacterial outer membrane biogenesis; LPS lipid A biosynthesis. Functionally, involved in the modification of the lipopolysaccharide (LPS) lipid A moiety. Catalyzes the transfer of a galacturonic acid (GalA) residue to the 4'-position of 4'-dephosphorylated lipid A, using dodecaprenyl phosphate-GalA as the donor substrate. Acts before the other GalA transferases RgtA, RgtB and RgtC. This Rhizobium johnstonii (strain DSM 114642 / LMG 32736 / 3841) (Rhizobium leguminosarum bv. viciae) protein is Lipid A galacturonosyltransferase RgtD.